Reading from the N-terminus, the 301-residue chain is MAVTFQHTPVLLTEVLTMLAPRPAGQYLDATVGGGGHALAVLQAAQPGGRLLGIDADPAALAATAARLQAAGLIEQAVLCHGSFADLATLAATAGFGAFDGILFDLGVSSYQLDTPERGFSFTADGPLDMRLDPTQGLTAADMVNRLSERELADIIFLYGEEHAARRIARAIVEHRRTQPFQRTAELAEVVARAVGGRHGRIHPATRTFQALRIAVNQELDRLRATLPQAVDLLAPGGRLAVISFHSLEDRIVKQFLRAEASGETPRLTIVTKKPIVPTAAEVANNPRARSAKLRVATRIG.

Residues 35-37, Asp-55, Phe-84, Asp-105, and Gln-112 contribute to the S-adenosyl-L-methionine site; that span reads GGH.

Belongs to the methyltransferase superfamily. RsmH family.

Its subcellular location is the cytoplasm. It carries out the reaction cytidine(1402) in 16S rRNA + S-adenosyl-L-methionine = N(4)-methylcytidine(1402) in 16S rRNA + S-adenosyl-L-homocysteine + H(+). Specifically methylates the N4 position of cytidine in position 1402 (C1402) of 16S rRNA. The chain is Ribosomal RNA small subunit methyltransferase H from Chloroflexus aurantiacus (strain ATCC 29366 / DSM 635 / J-10-fl).